Here is a 284-residue protein sequence, read N- to C-terminus: Co-chaperone protein DjlA (284 aa).

At 1-6 (MHIFGK) the chain is on the periplasmic side. Residues 7 to 30 (ILGAFFGFLFGGPFGAIFGIFLGH) traverse the membrane as a helical segment. The Cytoplasmic segment spans residues 31–284 (QFDKARRLNQ…ELIRKEKGIK (254 aa)). A disordered region spans residues 190 to 211 (QGGGFGGSQQQSHSGQQWQQPS). Positions 197-211 (SQQQSHSGQQWQQPS) are enriched in low complexity. Positions 218-284 (DAYEVLGVSE…ELIRKEKGIK (67 aa)) constitute a J domain.

Homodimer.

The protein resides in the cell inner membrane. Regulatory DnaK co-chaperone. Direct interaction between DnaK and DjlA is needed for the induction of the wcaABCDE operon, involved in the synthesis of a colanic acid polysaccharide capsule, possibly through activation of the RcsB/RcsC phosphotransfer signaling pathway. The colanic acid capsule may help the bacterium survive conditions outside the host. The sequence is that of Co-chaperone protein DjlA from Vibrio cholerae serotype O1 (strain ATCC 39315 / El Tor Inaba N16961).